A 20-amino-acid chain; its full sequence is 23 kDa cell wall protein (20 aa).

The protein localises to the secreted. It is found in the cell wall. The sequence is that of 23 kDa cell wall protein from Solanum lycopersicum (Tomato).